Here is a 127-residue protein sequence, read N- to C-terminus: Small ribosomal subunit protein uS13 (127 aa).

Positions 99–127 are disordered; the sequence is RGQRTRTNARTRRGRRGQAIGIKKKTLKK.

Belongs to the universal ribosomal protein uS13 family. As to quaternary structure, part of the 30S ribosomal subunit. Forms a loose heterodimer with protein S19. Forms two bridges to the 50S subunit in the 70S ribosome.

Located at the top of the head of the 30S subunit, it contacts several helices of the 16S rRNA. In the 70S ribosome it contacts the 23S rRNA (bridge B1a) and protein L5 of the 50S subunit (bridge B1b), connecting the 2 subunits; these bridges are implicated in subunit movement. Contacts the tRNAs in the A and P-sites. The chain is Small ribosomal subunit protein uS13 from Roseiflexus castenholzii (strain DSM 13941 / HLO8).